A 429-amino-acid polypeptide reads, in one-letter code: Glutamate-1-semialdehyde 2,1-aminomutase 1 (429 aa).

Residue Lys268 is modified to N6-(pyridoxal phosphate)lysine.

Belongs to the class-III pyridoxal-phosphate-dependent aminotransferase family. HemL subfamily. As to quaternary structure, homodimer. Requires pyridoxal 5'-phosphate as cofactor.

The protein resides in the cytoplasm. It catalyses the reaction (S)-4-amino-5-oxopentanoate = 5-aminolevulinate. Its pathway is porphyrin-containing compound metabolism; protoporphyrin-IX biosynthesis; 5-aminolevulinate from L-glutamyl-tRNA(Glu): step 2/2. The chain is Glutamate-1-semialdehyde 2,1-aminomutase 1 from Listeria welshimeri serovar 6b (strain ATCC 35897 / DSM 20650 / CCUG 15529 / CIP 8149 / NCTC 11857 / SLCC 5334 / V8).